Consider the following 388-residue polypeptide: G2/mitotic-specific cyclin-B2 (388 aa).

The tract at residues 46-67 (ATNGKVGPSKKPSKASCVQKPK) is disordered.

This sequence belongs to the cyclin family. Cyclin AB subfamily. As to quaternary structure, interacts with the CDK1 protein kinase to form a serine/threonine kinase holoenzyme complex also known as maturation promoting factor (MPF). The cyclin subunit imparts substrate specificity to the complex.

In terms of biological role, essential for the control of the cell cycle at the G2/M (mitosis) transition. The protein is G2/mitotic-specific cyclin-B2 (ccnb2) of Oryzias curvinotus (Hynann ricefish).